Reading from the N-terminus, the 369-residue chain is 4-hydroxy-3-methylbut-2-en-1-yl diphosphate synthase (flavodoxin) (369 aa).

Residues C270, C273, C305, and E312 each contribute to the [4Fe-4S] cluster site.

Belongs to the IspG family. Requires [4Fe-4S] cluster as cofactor.

The enzyme catalyses (2E)-4-hydroxy-3-methylbut-2-enyl diphosphate + oxidized [flavodoxin] + H2O + 2 H(+) = 2-C-methyl-D-erythritol 2,4-cyclic diphosphate + reduced [flavodoxin]. The protein operates within isoprenoid biosynthesis; isopentenyl diphosphate biosynthesis via DXP pathway; isopentenyl diphosphate from 1-deoxy-D-xylulose 5-phosphate: step 5/6. Its function is as follows. Converts 2C-methyl-D-erythritol 2,4-cyclodiphosphate (ME-2,4cPP) into 1-hydroxy-2-methyl-2-(E)-butenyl 4-diphosphate. The sequence is that of 4-hydroxy-3-methylbut-2-en-1-yl diphosphate synthase (flavodoxin) from Pseudomonas fluorescens (strain Pf0-1).